The sequence spans 162 residues: Transcription elongation factor GreA (162 aa).

Residues 46 to 77 adopt a coiled-coil conformation; sequence RENAEYKAAREEQTRLNNMVTRLQEEIERAQV.

Belongs to the GreA/GreB family.

Its function is as follows. Necessary for efficient RNA polymerase transcription elongation past template-encoded arresting sites. The arresting sites in DNA have the property of trapping a certain fraction of elongating RNA polymerases that pass through, resulting in locked ternary complexes. Cleavage of the nascent transcript by cleavage factors such as GreA or GreB allows the resumption of elongation from the new 3'terminus. GreA releases sequences of 2 to 3 nucleotides. The chain is Transcription elongation factor GreA from Treponema pallidum (strain Nichols).